We begin with the raw amino-acid sequence, 450 residues long: Phosphoglucosamine mutase (450 aa).

S101 serves as the catalytic Phosphoserine intermediate. Mg(2+) contacts are provided by S101, D240, D242, and D244. A Phosphoserine modification is found at S101.

Belongs to the phosphohexose mutase family. The cofactor is Mg(2+). Post-translationally, activated by phosphorylation.

It carries out the reaction alpha-D-glucosamine 1-phosphate = D-glucosamine 6-phosphate. Functionally, catalyzes the conversion of glucosamine-6-phosphate to glucosamine-1-phosphate. This is Phosphoglucosamine mutase from Streptococcus thermophilus (strain CNRZ 1066).